A 75-amino-acid polypeptide reads, in one-letter code: uncharacterized protein (75 aa).

Residues 43 to 67 form a dksA C4-type zinc finger; sequence CSECGLPIPTTRLRANPFAHRCVSC.

This is an uncharacterized protein from Haemophilus influenzae (strain ATCC 51907 / DSM 11121 / KW20 / Rd).